The sequence spans 1423 residues: Protein phosphatase Slingshot homolog 2 (1423 aa).

Disordered regions lie at residues 1–37 (MALV…PRSI) and 51–70 (LPRG…NKHA). Residues 9–18 (SPTPSTTSSP) are compositionally biased toward low complexity. Ser17, Ser25, and Ser36 each carry phosphoserine. The DEK-C domain occupies 248–303 (ERTERLIKTKLREIMMQKDLENITSKEIRTELEMQMVCNLREFKEFIDNEMIVILG). The Tyrosine-protein phosphatase domain occupies 307–448 (SPTQIFEHVF…LEEYQGILLA (142 aa)). The active-site Phosphocysteine intermediate is Cys392. Ser461, Ser487, Ser534, Ser631, and Ser633 each carry phosphoserine. Disordered stretches follow at residues 698–725 (EMAA…DEDQ), 833–858 (HSST…MHSG), 878–950 (RQEQ…HCER), 967–991 (APQD…QRAV), 1021–1042 (SLGH…KQGL), 1074–1105 (PQVL…KGDC), and 1207–1226 (PEAC…DLSH). Residues 884–904 (HGTASAGPTLSNRKNSKNDSS) are compositionally biased toward polar residues. 3 stretches are compositionally biased toward basic and acidic residues: residues 910–932 (PKWK…EPSK), 976–987 (SRSKKQEGDLKK), and 1033–1042 (PSKEGEKQGL). Ser1217 carries the post-translational modification Phosphoserine. Phosphothreonine is present on Thr1422.

The protein belongs to the protein-tyrosine phosphatase family. As to quaternary structure, interacts with filamentous actin. Expressed in brain, heart, liver, skeletal muscle, testis and thymus. Also expressed at lower levels in kidney, small intestine and spleen. Within testicular seminiferous tubules expressed in germ cells and spermatocytes, where it has a cytoplasmic localization, and round spermatids, where it concentrates in the acrosomal region next to the nucleus.

It localises to the cytoplasm. The protein localises to the cytoskeleton. Its subcellular location is the cell junction. The protein resides in the focal adhesion. It is found in the cytoplasmic vesicle. It localises to the secretory vesicle. The protein localises to the acrosome. The enzyme catalyses O-phospho-L-tyrosyl-[protein] + H2O = L-tyrosyl-[protein] + phosphate. It catalyses the reaction O-phospho-L-seryl-[protein] + H2O = L-seryl-[protein] + phosphate. The catalysed reaction is O-phospho-L-threonyl-[protein] + H2O = L-threonyl-[protein] + phosphate. Functionally, protein phosphatase which regulates actin filament dynamics. Dephosphorylates and activates the actin binding/depolymerizing factor cofilin, which subsequently binds to actin filaments and stimulates their disassembly. Inhibitory phosphorylation of cofilin is mediated by LIMK1, which may also be dephosphorylated and inactivated by this protein. Required for spermatogenesis. Involved in acrosome biogenesis, probably by regulating cofilin-mediated actin cytoskeleton remodeling during proacrosomal vesicle fusion and/or Golgi to perinuclear vesicle trafficking. The protein is Protein phosphatase Slingshot homolog 2 (Ssh2) of Mus musculus (Mouse).